An 868-amino-acid chain; its full sequence is Programmed cell death 6-interacting protein (868 aa).

At A2 the chain carries N-acetylalanine. Residues 3–392 form the BRO1 domain; sequence TFISVQLKKT…AQMREATTLA (390 aa). Residues 176-503 are interaction with CHMP4A, CHMP4B and CHMP4C; it reads TVDISPDTVG…NFRTVLDKAV (328 aa). The interaction with EIAV p9 stretch occupies residues 176 to 868; that stretch reads TVDISPDTVG…PPQQSYYPQQ (693 aa). K215 carries the N6-acetyllysine modification. The interval 418 to 868 is interaction with SDCBP; sequence LTKSRSVIEQ…PPQQSYYPQQ (451 aa). Phosphothreonine is present on T479. S481 carries the phosphoserine modification. The self-association stretch occupies residues 503–868; that stretch reads VQADGQVKEC…PPQQSYYPQQ (366 aa). Disordered regions lie at residues 713–809 and 832–868; these read IARE…YPGY and PYPP…YPQQ. The segment at 717-720 is interaction with TSG101; the sequence is PSAP. A Phosphoserine modification is found at S730. The span at 737 to 763 shows a compositional bias: pro residues; that stretch reads PTPPTPAPRTMPPTKPQPPARPPPPVL. A phosphothreonine mark is found at T738 and T741. R745 bears the Omega-N-methylarginine mark. Residues 778 to 791 are compositionally biased toward low complexity; that stretch reads GAGTAAPAPSQTPG. 2 stretches are compositionally biased toward pro residues: residues 792-807 and 844-860; these read SAPP…PTYP and APYP…PQPP. The tract at residues 801–806 is interaction with CEP55; it reads PPYPTY. The tract at residues 864–868 is essential to promote virus budding; it reads YYPQQ.

Self-associates. Interacts with SH3KBP1/CIN85. Interacts with PDCD6 in a calcium -dependent manner. Interacts with TSG101 in a calcium-dependent manner; PDCD6IP homooligomerization may be required for TSG101-binding. Interacts with SGSM3. Directly interacts with CHMP4A, CHMP4B and CHMP4C. Directly interacts with CEP55 in a 1:2 stoechiometry. The interaction with CEP55 is required for PDCD6IP targeting to the midbody. May interact with PDGFRB. Interacts with SH3GL1 and SH3GL2/endophilin-1. Forms a complex with SDCBP and SDC2. Found in a complex with F-actin, TJP1/ZO-1 and PARD3. Interacts with CD2AP. Interacts with ARRDC1. Interacts (via BRO1 domain) with the ATG12-ATG3 conjugate; this interaction is bridged by ATG12 and promotes multiple PDCD6IP-mediated functions such as endolysosomal trafficking, macroautophagy and exosome biogenesis. In terms of assembly, (Microbial infection) Interacts with HIV-1 p6. Interacts with HIV-1 p9. As to quaternary structure, (Microbial infection) Interacts with EIAV p9. (Microbial infection) Interacts with Murine leukemia virus Gag polyprotein (via LYPX(n)L motif). In terms of assembly, (Microbial infection) Interacts with ebola virus protein VP40 (via YPx(n)L/I motif). In terms of processing, may be phosphorylated on tyrosine residues by activated PDGFRB.

Its subcellular location is the cytoplasm. The protein localises to the cytosol. It localises to the melanosome. The protein resides in the cytoskeleton. It is found in the microtubule organizing center. Its subcellular location is the centrosome. The protein localises to the secreted. It localises to the extracellular exosome. The protein resides in the cell junction. It is found in the tight junction. Its subcellular location is the midbody. The protein localises to the midbody ring. Its function is as follows. Multifunctional protein involved in endocytosis, multivesicular body biogenesis, membrane repair, cytokinesis, apoptosis and maintenance of tight junction integrity. Class E VPS protein involved in concentration and sorting of cargo proteins of the multivesicular body (MVB) for incorporation into intralumenal vesicles (ILVs) that are generated by invagination and scission from the limiting membrane of the endosome. Binds to the phospholipid lysobisphosphatidic acid (LBPA) which is abundant in MVBs internal membranes. The MVB pathway requires the sequential function of ESCRT-O, -I,-II and -III complexes. The ESCRT machinery also functions in topologically equivalent membrane fission events, such as the terminal stages of cytokinesis. Adapter for a subset of ESCRT-III proteins, such as CHMP4, to function at distinct membranes. Required for completion of cytokinesis. May play a role in the regulation of both apoptosis and cell proliferation. Regulates exosome biogenesis in concert with SDC1/4 and SDCBP. By interacting with F-actin, PARD3 and TJP1 secures the proper assembly and positioning of actomyosin-tight junction complex at the apical sides of adjacent epithelial cells that defines a spatial membrane domain essential for the maintenance of epithelial cell polarity and barrier. (Microbial infection) Involved in HIV-1 virus budding. Can replace TSG101 it its role of supporting HIV-1 release; this function requires the interaction with CHMP4B. The ESCRT machinery also functions in topologically equivalent membrane fission events, such as enveloped virus budding (HIV-1 and other lentiviruses). The sequence is that of Programmed cell death 6-interacting protein from Homo sapiens (Human).